The primary structure comprises 134 residues: Fatty acid-binding protein 5 (134 aa).

The Nuclear localization signal signature appears at 23 to 33 (KELGVGMAMRK). Hexadecanoate contacts are provided by residues Arg109 and 129-131 (RVY). N-eicosanoyl ethanolamine is bound by residues Arg109 and Tyr131. 129 to 131 (RVY) contributes to the (9Z,12Z)-octadecadienoate binding site.

Belongs to the calycin superfamily. Fatty-acid binding protein (FABP) family. As to quaternary structure, monomer.

The protein localises to the cytoplasm. It is found in the nucleus. It localises to the synapse. Its subcellular location is the postsynaptic density. The protein resides in the secreted. The enzyme catalyses hexadecanoate(out) = hexadecanoate(in). It catalyses the reaction (9Z,12Z)-octadecadienoate(out) = (9Z,12Z)-octadecadienoate(in). The catalysed reaction is (9Z)-octadecenoate(out) = (9Z)-octadecenoate(in). In terms of biological role, intracellular carrier for long-chain fatty acids and related active lipids, such as endocannabinoids, that regulate the metabolism and actions of the ligands they bind. In addition to the cytosolic transport, selectively delivers specific fatty acids from the cytosol to the nucleus, wherein they activate nuclear receptors. Delivers retinoic acid to the nuclear receptor peroxisome proliferator-activated receptor delta; which promotes proliferation and survival. May also serve as a synaptic carrier of endocannabinoid at central synapses and thus controls retrograde endocannabinoid signaling. Modulates inflammation by regulating PTGES induction via NF-kappa-B activation, and prostaglandin E2 (PGE2) biosynthesis during inflammation. Has the highest binding affinity for docosahexaenoic acid (DHA) and decreasing relative affinity for eicosapentaenoic acid (EPA), alpha-linolenic acid (ALA), oleic acid, palmitic acid, linoleic acid and stearic acid, respectively. The protein is Fatty acid-binding protein 5 of Pygoscelis papua (Gentoo penguin).